The sequence spans 583 residues: METPNQDSGRTPTEQSAANDLSVADRQVNILRDKLRHIDRQLAAATQNNTKLVSMLETAKAEILRLKNALDQEGQPPYSFGTILQLNPRRQPAPGNSGQAATEESADIFNAGRKMRVGLSPLVNINQLTVGQEVLLNEALLIVAGLGYERAGELATLKEMLGADRALVVGRADEERVVRLSGALLAQKLRVGDALSIDSRTGYALEKVPRSEVENLVLEEVPDITYEDIGGLGPQIEQIRDAVELPFLHPDLYREHGLKAPKGILLYGPPGCGKTLIAKAVANSLAARAAERSGNVDLKSYFLNIKGPELLDKYVGETERHIRLIFARAREKASDGSPVVVFFDEMDSLFRTRGTGISSDVETTIVPQLLSEIDGVERLDNVIVIGASNREDMIDPAILRPGRLDVKVKIHRPDAEAAADIFNKYITPDLPFHESDLAEHNGDVQATVDAMVQRTVEAMYSTDKSNEFLEVTYANGDTEMLYFKDFNSGAVVQNVVDRAKKYAIKDLLTSQQRGLRIEHLLRAVVDEFREHEDMPNTTNPDDWARISGKKGERITYIRTIVQGKAGQEPGKSIETTPTTGQYL.

Residues 1-19 show a composition bias toward polar residues; it reads METPNQDSGRTPTEQSAAN. The tract at residues 1-22 is disordered; sequence METPNQDSGRTPTEQSAANDLS. A coiled-coil region spans residues 24 to 75; that stretch reads ADRQVNILRDKLRHIDRQLAAATQNNTKLVSMLETAKAEILRLKNALDQEGQ. 271 to 276 provides a ligand contact to ATP; the sequence is GCGKTL. Residues 582 to 583 are docks into pockets in the proteasome alpha-ring; sequence YL.

Belongs to the AAA ATPase family. Homohexamer. Assembles into a hexameric ring structure that caps the 20S proteasome core. Strongly interacts with the prokaryotic ubiquitin-like protein Pup through a hydrophobic interface; the interacting region of ARC lies in its N-terminal coiled-coil domain. There is one Pup binding site per ARC hexamer ring. Upon ATP-binding, the C-terminus of ARC interacts with the alpha-rings of the proteasome core, possibly by binding to the intersubunit pockets.

Its pathway is protein degradation; proteasomal Pup-dependent pathway. Its function is as follows. ATPase which is responsible for recognizing, binding, unfolding and translocation of pupylated proteins into the bacterial 20S proteasome core particle. May be essential for opening the gate of the 20S proteasome via an interaction with its C-terminus, thereby allowing substrate entry and access to the site of proteolysis. Thus, the C-termini of the proteasomal ATPase may function like a 'key in a lock' to induce gate opening and therefore regulate proteolysis. This is Proteasome-associated ATPase from Pseudarthrobacter chlorophenolicus (strain ATCC 700700 / DSM 12829 / CIP 107037 / JCM 12360 / KCTC 9906 / NCIMB 13794 / A6) (Arthrobacter chlorophenolicus).